A 644-amino-acid chain; its full sequence is Probable lysophospholipase 2 (644 aa).

The N-terminal stretch at 1–19 (MYFQSFYFLALLLATAVYG) is a signal peptide. N-linked (GlcNAc...) asparagine glycans are attached at residues Asn-44, Asn-96, Asn-141, Asn-178, Asn-221, Asn-245, Asn-253, Asn-281, Asn-286, Asn-316, Asn-319, Asn-373, Asn-393, Asn-449, Asn-501, Asn-558, Asn-579, and Asn-596. A PLA2c domain is found at 53-600 (SCDSSEIMVN…SQYCWNGTVD (548 aa)).

This sequence belongs to the lysophospholipase family.

It is found in the secreted. The enzyme catalyses a 1-acyl-sn-glycero-3-phosphocholine + H2O = sn-glycerol 3-phosphocholine + a fatty acid + H(+). Its function is as follows. Catalyzes the release of fatty acids from lysophospholipids. The chain is Probable lysophospholipase 2 (plb2) from Schizosaccharomyces pombe (strain 972 / ATCC 24843) (Fission yeast).